Consider the following 638-residue polypeptide: 1-deoxy-D-xylulose-5-phosphate synthase (638 aa).

Thiamine diphosphate contacts are provided by residues histidine 79 and 120–122; that span reads AHS. Aspartate 151 serves as a coordination point for Mg(2+). Thiamine diphosphate is bound by residues 152–153, asparagine 180, tyrosine 289, and glutamate 371; that span reads GA. Residue asparagine 180 participates in Mg(2+) binding.

Belongs to the transketolase family. DXPS subfamily. As to quaternary structure, homodimer. It depends on Mg(2+) as a cofactor. Thiamine diphosphate is required as a cofactor.

It carries out the reaction D-glyceraldehyde 3-phosphate + pyruvate + H(+) = 1-deoxy-D-xylulose 5-phosphate + CO2. Its pathway is metabolic intermediate biosynthesis; 1-deoxy-D-xylulose 5-phosphate biosynthesis; 1-deoxy-D-xylulose 5-phosphate from D-glyceraldehyde 3-phosphate and pyruvate: step 1/1. Its function is as follows. Catalyzes the acyloin condensation reaction between C atoms 2 and 3 of pyruvate and glyceraldehyde 3-phosphate to yield 1-deoxy-D-xylulose-5-phosphate (DXP). This chain is 1-deoxy-D-xylulose-5-phosphate synthase, found in Rhizobium etli (strain CIAT 652).